Consider the following 252-residue polypeptide: Aquaporin TIP4-4 (252 aa).

2 helical membrane-spanning segments follow: residues 20–40 (AVLA…GSAM) and 53–73 (VVGL…MVSA). The NPA 1 motif lies at 83 to 85 (NPA). The next 3 helical transmembrane spans lie at 105-125 (VAAQ…LAVA), 143-163 (GVLM…ATVV), and 168-188 (AVGG…VLAG). An NPA 2 motif is present at residues 197-199 (NPA). A helical transmembrane segment spans residues 216–236 (VYWVGPLIGGPLAGLVYDGLF).

Belongs to the MIP/aquaporin (TC 1.A.8) family. TIP (TC 1.A.8.10) subfamily.

It is found in the vacuole membrane. In terms of biological role, aquaporins facilitate the transport of water and small neutral solutes across cell membranes. This is Aquaporin TIP4-4 (TIP4-4) from Zea mays (Maize).